Consider the following 750-residue polypeptide: MPPATGGGLAESELRPRRGRCGPQAARAAGRDVAAEAVARSPKRPAWGSRRFEAVGWWALLALVTLLSFATRFHRLDEPPHICWDETHFGKMGSYYINRTFFFDVHPPLGKMLIGLAGYLSGYDGTFLFQKPGDKYEHHSYMGMRGFCAFLGSWLVPFAYLTVLDLSKSLSAALLTAALLTFDTGCLTLSQYILLDPILMFFIMAAMLSMVKYNSCADRPFSAPWWFWLSLTGVSLAGALGVKFVGLFIILQVGLNTIADLWYLFGDLSLSLVTVGKHLTARVLCLIVLPLALYTATFAVHFMVLSKSGPGDGFFSSAFQARLSGNNLHNASIPEHLAYGSVITVKNLRMAIGYLHSHRHLYPEGIGARQQQVTTYLHKDYNNLWIIKKHNTNSDPLDPSFPVEFVRHGDIIRLEHKETSRNLHSHYHEAPMTRKHYQVTGYGINGTGDSNDFWRIEVVNRKFGNRIKVLRSRIRFIHLVTGCVLGSSGKVLPKWGWEQLEVTCTPYLKETLNSIWNVEDHINPKLPNISLDVLQPSFPEILLESHMVMIRGNSGLKPKDNEFTSKPWHWPINYQGLRFSGVNDTDFRVYLLGNPVVWWLNLLSIALYLLSGSIIAVAMQRGARLPAEVAGLSQVLLRGGGQVLLGWTLHYFPFFLMGRVLYFHHYFPAMLFSSMLTGILWDTLLRLCAWGLASWPLARGIHVAGILSLLLGTAYSFYLFHPLAYGMVGPLAQDPQSPMAGLRWLDSWDF.

Residues 1 to 23 (MPPATGGGLAESELRPRRGRCGP) form a disordered region. A Phosphoserine modification is found at Ser-41. Residues 54 to 74 (AVGWWALLALVTLLSFATRFH) traverse the membrane as a helical segment. Asn-98 carries N-linked (GlcNAc...) asparagine glycosylation. Helical transmembrane passes span 100–120 (TFFF…AGYL), 146–166 (GFCA…VLDL), 191–211 (QYIL…LSMV), 231–251 (LTGV…FIIL), and 283–303 (VLCL…VHFM). A glycan (N-linked (GlcNAc...) asparagine) is linked at Asn-330. MIR domains follow at residues 334–390 (PEHL…IKKH), 403–459 (VEFV…IEVV), and 464–521 (GNRI…VEDH). Asn-445 is a glycosylation site (N-linked (GlcNAc...) asparagine). Residues Asn-528 and Asn-583 are each glycosylated (N-linked (GlcNAc...) asparagine). Helical transmembrane passes span 596-616 (VVWW…SIIA), 643-663 (VLLG…VLYF), 665-685 (HYFP…DTLL), and 700-720 (GIHV…FYLF).

This sequence belongs to the glycosyltransferase 39 family. Interacts with POMT1. In terms of processing, N-glycosylated. Highly expressed in testis; detected at low levels in most tissues.

It localises to the endoplasmic reticulum membrane. It catalyses the reaction a di-trans,poly-cis-dolichyl beta-D-mannosyl phosphate + L-seryl-[protein] = 3-O-(alpha-D-mannosyl)-L-seryl-[protein] + a di-trans,poly-cis-dolichyl phosphate + H(+). It carries out the reaction a di-trans,poly-cis-dolichyl beta-D-mannosyl phosphate + L-threonyl-[protein] = 3-O-(alpha-D-mannosyl)-L-threonyl-[protein] + a di-trans,poly-cis-dolichyl phosphate + H(+). It participates in protein modification; protein glycosylation. With respect to regulation, slightly activated by Mg(2+) and inhibited by both Ca(+) and Mn(2+). EDTA ha no effect on activity in vitro. In terms of biological role, transfers mannosyl residues to the hydroxyl group of serine or threonine residues. Coexpression of both POMT1 and POMT2 is necessary for enzyme activity, expression of either POMT1 or POMT2 alone is insufficient. Essentially dedicated to O-mannosylation of alpha-DAG1 and few other proteins but not of cadherins and protocaherins. In Homo sapiens (Human), this protein is Protein O-mannosyl-transferase 2 (POMT2).